A 151-amino-acid chain; its full sequence is MSSAPTPHVAWFRLFQRGQIYMKTWPNEKRLAPVFPENRVTRATRFAIRFMPPIAMFTLCWQIALGGQLGPAIATALFACSLPMQGLWWLGKRAVTPLPPTLLQWFHQLRDKLQASGIALAPVDGAPTYQSLAELLRRCCKQLDKTFLDDI.

The next 2 helical transmembrane spans lie at 46–65 (FAIR…QIAL) and 69–91 (LGPA…WWLG).

It belongs to the UPF0208 family.

Its subcellular location is the cell inner membrane. The protein is UPF0208 membrane protein NT01EI_2692 of Edwardsiella ictaluri (strain 93-146).